The sequence spans 282 residues: Probable endonuclease 4 (282 aa).

Zn(2+) is bound by residues H66, H106, E143, D176, H179, H213, D226, H228, and E258.

The protein belongs to the AP endonuclease 2 family. Zn(2+) serves as cofactor.

It carries out the reaction Endonucleolytic cleavage to 5'-phosphooligonucleotide end-products.. In terms of biological role, endonuclease IV plays a role in DNA repair. It cleaves phosphodiester bonds at apurinic or apyrimidinic (AP) sites, generating a 3'-hydroxyl group and a 5'-terminal sugar phosphate. This Aquifex aeolicus (strain VF5) protein is Probable endonuclease 4.